Reading from the N-terminus, the 221-residue chain is Adenylate kinase (221 aa).

Residue 10–15 coordinates ATP; sequence GAGKGT. An NMP region spans residues 30 to 59; sequence STGDMLRAAVKAGTPLGIEAKKVMDAGGLV. AMP-binding positions include Thr-31, Arg-36, 57–59, 85–88, and Gln-92; these read GLV and GFPR. The LID stretch occupies residues 122 to 159; it reads GRRVHVASGRTYHVKFNPPKADMVDDETGEALIQRDDD. Residues Arg-123 and 132–133 contribute to the ATP site; that span reads TY. AMP contacts are provided by Arg-156 and Arg-167. Residue Gly-207 coordinates ATP.

It belongs to the adenylate kinase family. As to quaternary structure, monomer.

The protein localises to the cytoplasm. The enzyme catalyses AMP + ATP = 2 ADP. It functions in the pathway purine metabolism; AMP biosynthesis via salvage pathway; AMP from ADP: step 1/1. In terms of biological role, catalyzes the reversible transfer of the terminal phosphate group between ATP and AMP. Plays an important role in cellular energy homeostasis and in adenine nucleotide metabolism. The polypeptide is Adenylate kinase (Cupriavidus metallidurans (strain ATCC 43123 / DSM 2839 / NBRC 102507 / CH34) (Ralstonia metallidurans)).